Consider the following 214-residue polypeptide: Large ribosomal subunit protein uL3 (214 aa).

The tract at residues 119–159 (GVKRHGFAGGPKTHGQSDRHRAPGSIGPTTDPGRVHKGKRM) is disordered.

It belongs to the universal ribosomal protein uL3 family. Part of the 50S ribosomal subunit. Forms a cluster with proteins L14 and L19.

In terms of biological role, one of the primary rRNA binding proteins, it binds directly near the 3'-end of the 23S rRNA, where it nucleates assembly of the 50S subunit. In Thermomicrobium roseum (strain ATCC 27502 / DSM 5159 / P-2), this protein is Large ribosomal subunit protein uL3.